The primary structure comprises 349 residues: Green-sensitive opsin-1 (349 aa).

At 1-36 (MNGTEGSNFYIPMSNRTGLVRSPYDYTQYYLAEPWK) the chain is on the extracellular side. N2 and N15 each carry an N-linked (GlcNAc...) asparagine glycan. Residues 37–61 (FKALAFYMFLLIIFGFPINVLTLVV) traverse the membrane as a helical segment. Topologically, residues 62–73 (TAQHKKLRQPLN) are cytoplasmic. Residues 74 to 99 (YILVNLAFAGTIMVIFGFTVSFYCSL) traverse the membrane as a helical segment. The Extracellular portion of the chain corresponds to 100-113 (VGYMALGPLGCVME). Cysteines 110 and 187 form a disulfide. The chain crosses the membrane as a helical span at residues 114–133 (GFFATLGGQVALWSLVVLAI). Over 134–152 (ERYIVVCKPMGSFKFSANH) the chain is Cytoplasmic. Residues 153–176 (AMAGIAFTWFMACSCAVPPLFGWS) traverse the membrane as a helical segment. Topologically, residues 177–202 (RYLPEGMQTSCGPDYYTLNPEYNNES) are extracellular. N200 carries N-linked (GlcNAc...) asparagine glycosylation. The chain crosses the membrane as a helical span at residues 203–230 (YVMYMFSCHFCIPVTTIFFTYGSLVCTV). The Cytoplasmic segment spans residues 231 to 252 (KAAAAQQQESESTQKAEREVTR). The helical transmembrane segment at 253-276 (MVILMVLGFLFAWVPYASFAAWIF) threads the bilayer. Over 277 to 284 (FNRGAAFS) the chain is Extracellular. A helical transmembrane segment spans residues 285–309 (AQAMAVPAFFSKTSAVFNPIIYVLL). K296 bears the N6-(retinylidene)lysine mark. The Cytoplasmic portion of the chain corresponds to 310-349 (NKQFRSCMLNTLFCGKSPLGDDESSSVSTSKTEVSSVSPA). The tract at residues 328–349 (LGDDESSSVSTSKTEVSSVSPA) is disordered. Residues 334–349 (SSVSTSKTEVSSVSPA) are compositionally biased toward low complexity.

Belongs to the G-protein coupled receptor 1 family. Opsin subfamily. In terms of processing, phosphorylated on some or all of the serine and threonine residues present in the C-terminal region. In terms of tissue distribution, retinal double cone accessory photoreceptor cell outer segments.

The protein localises to the membrane. Functionally, visual pigments are the light-absorbing molecules that mediate vision. They consist of an apoprotein, opsin, covalently linked to cis-retinal. The polypeptide is Green-sensitive opsin-1 (opn1mw1) (Danio rerio (Zebrafish)).